The following is a 407-amino-acid chain: Serine/threonine transporter SstT (407 aa).

The next 9 helical transmembrane spans lie at 12–32 (GNLIVQICIGIVLGILIGISS), 42–62 (LGILFTSALKAIAPMLVFILI), 81–101 (IIILYIVGTFLASACAVLANF), 141–161 (ALSSGNYLGILTWAIAGGIAL), 179–199 (VLKIVKFIVKLAPFGIFGLVA), 218–238 (ILLVTTMLFVTFVINALIVFF), 245–267 (FPLIFICLRHSAFFAFFTRSSAA), 288–308 (ISIPLGATINMAGAAVTIAIL), and 330–350 (IIATFAACGASGVAGGSLLLI).

This sequence belongs to the dicarboxylate/amino acid:cation symporter (DAACS) (TC 2.A.23) family.

The protein resides in the cell inner membrane. It catalyses the reaction L-serine(in) + Na(+)(in) = L-serine(out) + Na(+)(out). The catalysed reaction is L-threonine(in) + Na(+)(in) = L-threonine(out) + Na(+)(out). Its function is as follows. Involved in the import of serine and threonine into the cell, with the concomitant import of sodium (symport system). The polypeptide is Serine/threonine transporter SstT (Campylobacter jejuni subsp. jejuni serotype O:6 (strain 81116 / NCTC 11828)).